The primary structure comprises 237 residues: Ribonuclease PH (237 aa).

Phosphate-binding positions include R86 and 124 to 126 (GTR).

Belongs to the RNase PH family. As to quaternary structure, homohexameric ring arranged as a trimer of dimers.

The catalysed reaction is tRNA(n+1) + phosphate = tRNA(n) + a ribonucleoside 5'-diphosphate. In terms of biological role, phosphorolytic 3'-5' exoribonuclease that plays an important role in tRNA 3'-end maturation. Removes nucleotide residues following the 3'-CCA terminus of tRNAs; can also add nucleotides to the ends of RNA molecules by using nucleoside diphosphates as substrates, but this may not be physiologically important. Probably plays a role in initiation of 16S rRNA degradation (leading to ribosome degradation) during starvation. The protein is Ribonuclease PH of Shewanella loihica (strain ATCC BAA-1088 / PV-4).